We begin with the raw amino-acid sequence, 87 residues long: uncharacterized protein (87 aa).

This is an uncharacterized protein from Dictyostelium discoideum (Social amoeba).